We begin with the raw amino-acid sequence, 62 residues long: Large ribosomal subunit protein uL29 (62 aa).

The protein belongs to the universal ribosomal protein uL29 family.

The protein is Large ribosomal subunit protein uL29 of Enterococcus faecalis (strain ATCC 700802 / V583).